The chain runs to 207 residues: Dephospho-CoA kinase (207 aa).

One can recognise a DPCK domain in the interval 5 to 203 (AVGLTGGIAC…ARYRALASVF (199 aa)). 13 to 18 (ACGKSL) provides a ligand contact to ATP.

It belongs to the CoaE family.

It is found in the cytoplasm. The enzyme catalyses 3'-dephospho-CoA + ATP = ADP + CoA + H(+). It functions in the pathway cofactor biosynthesis; coenzyme A biosynthesis; CoA from (R)-pantothenate: step 5/5. In terms of biological role, catalyzes the phosphorylation of the 3'-hydroxyl group of dephosphocoenzyme A to form coenzyme A. This is Dephospho-CoA kinase from Xylella fastidiosa (strain 9a5c).